A 217-amino-acid chain; its full sequence is Homologous-pairing protein 2 homolog (217 aa).

Positions 93-153 (IVALTAKVQS…LKNIKAATNH (61 aa)) form a coiled coil. Positions 118–182 (SSALTTPEMQ…WRKRKRMATE (65 aa)) are DNA-binding.

The protein belongs to the HOP2 family. In terms of assembly, interacts with the DNA-binding domain of the nuclear receptors NR3C1/GR, ESR2/ER-beta, THRB and RXRA. Forms a stable heterodimer with MND1. Interacts with PSMC3/TBP1. PTM: Phosphorylated by PKA, PKC and MAPK. As to expression, highly expressed in testis and colon.

Its subcellular location is the nucleus. Its function is as follows. Plays an important role in meiotic recombination. Stimulates DMC1-mediated strand exchange required for pairing homologous chromosomes during meiosis. The complex PSMC3IP/MND1 binds DNA, stimulates the recombinase activity of DMC1 as well as DMC1 D-loop formation from double-strand DNA. This complex stabilizes presynaptic RAD51 and DMC1 filaments formed on single strand DNA to capture double-strand DNA. This complex stimulates both synaptic and presynaptic critical steps in RAD51 and DMC1-promoted homologous pairing. May inhibit HIV-1 viral protein TAT activity and modulate the activity of proteasomes through association with PSMC3. Acts as a tissue specific coactivator of hormone-dependent transcription mediated by nuclear receptors. The polypeptide is Homologous-pairing protein 2 homolog (PSMC3IP) (Homo sapiens (Human)).